The sequence spans 562 residues: uncharacterized protein (562 aa).

The next 5 helical transmembrane spans lie at 15–34, 41–63, 78–97, 104–126, and 165–187; these read WGGG…AFGI, VAGI…HFNL, LILF…FSAF, LNML…HFIT, and IALG…LLGL. RCK C-terminal domains follow at residues 204 to 286 and 289 to 374; these read QGLG…ITAF and KPIE…VLGN. The next 6 helical transmembrane spans lie at 384–403, 413–430, 450–472, 476–498, 505–524, and 539–561; these read LIPI…IPFM, LGLA…SRFG, IGIS…ETII, GYVW…GFIG, NYYT…PALA, and YATV…ILSL.

It belongs to the AAE transporter (TC 2.A.81) family.

The protein localises to the cell membrane. This is an uncharacterized protein from Bacteroides fragilis (strain YCH46).